Reading from the N-terminus, the 158-residue chain is Placenta growth factor (158 aa).

Residues 1–23 (MLAMKLFTCFLQVLAGLAVHSQG) constitute a signal peptide (or 26). 2 N-linked (GlcNAc...) asparagine glycosylation sites follow: asparagine 29 and asparagine 30. Intrachain disulfides connect cysteine 48/cysteine 90, cysteine 79/cysteine 125, and cysteine 83/cysteine 127. Asparagine 97 is a glycosylation site (N-linked (GlcNAc...) asparagine). The interval 136–158 (AERRKTKGKRKQSKTPQTEEPHL) is disordered. Basic residues predominate over residues 137-148 (ERRKTKGKRKQS).

The protein belongs to the PDGF/VEGF growth factor family. In terms of assembly, antiparallel homodimer; disulfide-linked. Also found as heterodimer with VEGFA/VEGF.

Its subcellular location is the secreted. Functionally, growth factor active in angiogenesis and endothelial cell growth, stimulating their proliferation and migration. It binds to the receptor FLT1/VEGFR-1. Also promotes cell tumor growth. In Rattus norvegicus (Rat), this protein is Placenta growth factor (Pgf).